Consider the following 492-residue polypeptide: Ketol-acid reductoisomerase (NADP(+)) (492 aa).

The KARI N-terminal Rossmann domain occupies 15–208 (AQLGKCRFMA…GGHRAGVLES (194 aa)). Residues 45–48 (CGAQ), R68, R76, S78, and 108–110 (DKQ) contribute to the NADP(+) site. Residue H132 is part of the active site. G158 is a binding site for NADP(+). 2 KARI C-terminal knotted domains span residues 209–344 (SFVA…TAAQ) and 345–485 (FEGK…MTDM). Residues D217, E221, E389, and E393 each contribute to the Mg(2+) site. Position 414 (S414) interacts with substrate.

This sequence belongs to the ketol-acid reductoisomerase family. It depends on Mg(2+) as a cofactor.

The enzyme catalyses (2R)-2,3-dihydroxy-3-methylbutanoate + NADP(+) = (2S)-2-acetolactate + NADPH + H(+). It carries out the reaction (2R,3R)-2,3-dihydroxy-3-methylpentanoate + NADP(+) = (S)-2-ethyl-2-hydroxy-3-oxobutanoate + NADPH + H(+). The protein operates within amino-acid biosynthesis; L-isoleucine biosynthesis; L-isoleucine from 2-oxobutanoate: step 2/4. Its pathway is amino-acid biosynthesis; L-valine biosynthesis; L-valine from pyruvate: step 2/4. Involved in the biosynthesis of branched-chain amino acids (BCAA). Catalyzes an alkyl-migration followed by a ketol-acid reduction of (S)-2-acetolactate (S2AL) to yield (R)-2,3-dihydroxy-isovalerate. In the isomerase reaction, S2AL is rearranged via a Mg-dependent methyl migration to produce 3-hydroxy-3-methyl-2-ketobutyrate (HMKB). In the reductase reaction, this 2-ketoacid undergoes a metal-dependent reduction by NADPH to yield (R)-2,3-dihydroxy-isovalerate. This chain is Ketol-acid reductoisomerase (NADP(+)), found in Erwinia tasmaniensis (strain DSM 17950 / CFBP 7177 / CIP 109463 / NCPPB 4357 / Et1/99).